Reading from the N-terminus, the 444-residue chain is tRNA pseudouridine synthase Pus10 (444 aa).

Asp265 (nucleophile) is an active-site residue. Residues Tyr333 and Tyr405 each coordinate substrate.

It belongs to the pseudouridine synthase Pus10 family.

It carries out the reaction uridine(54) in tRNA = pseudouridine(54) in tRNA. The catalysed reaction is uridine(55) in tRNA = pseudouridine(55) in tRNA. Functionally, responsible for synthesis of pseudouridine from uracil-54 and uracil-55 in the psi GC loop of transfer RNAs. This chain is tRNA pseudouridine synthase Pus10, found in Thermofilum pendens (strain DSM 2475 / Hrk 5).